A 137-amino-acid chain; its full sequence is Large ribosomal subunit protein uL16c (137 aa).

It belongs to the universal ribosomal protein uL16 family. As to quaternary structure, part of the 50S ribosomal subunit.

It localises to the plastid. Its subcellular location is the chloroplast. This is Large ribosomal subunit protein uL16c from Thalassiosira pseudonana (Marine diatom).